The chain runs to 238 residues: Ribose-5-phosphate isomerase A (238 aa).

Substrate is bound by residues 30 to 33 (SGST), 87 to 90 (DGAD), and 100 to 103 (KGGG). Glu109 serves as the catalytic Proton acceptor. Position 127 (Lys127) interacts with substrate.

Belongs to the ribose 5-phosphate isomerase family. Homodimer.

The enzyme catalyses aldehydo-D-ribose 5-phosphate = D-ribulose 5-phosphate. The protein operates within carbohydrate degradation; pentose phosphate pathway; D-ribose 5-phosphate from D-ribulose 5-phosphate (non-oxidative stage): step 1/1. Functionally, catalyzes the reversible conversion of ribose-5-phosphate to ribulose 5-phosphate. The polypeptide is Ribose-5-phosphate isomerase A (Synechococcus sp. (strain WH7803)).